We begin with the raw amino-acid sequence, 801 residues long: Cadherin-20 (801 aa).

An N-terminal signal peptide occupies residues 1–34 (MWTTGRMSNAKSWLGLGTSLYFWALMDLATTVLS). Residues 35–59 (STPMPEVELDTLFSGKPQSHQRSRR) constitute a propeptide that is removed on maturation. The Extracellular portion of the chain corresponds to 60–619 (SWVWNQFFVL…AYMLPVSLSR (560 aa)). 5 Cadherin domains span residues 61-165 (WVWN…EPKF), 166-274 (LDGP…PPRF), 275-389 (PQKH…PPVF), 390-494 (EPRF…APEF), and 494-610 (FPRF…SPEA). N-linked (GlcNAc...) asparagine glycosylation is present at Asn261. 3 N-linked (GlcNAc...) asparagine glycosylation sites follow: Asn420, Asn461, and Asn542. The helical transmembrane segment at 620–640 (GALIAILACVFVLLVLVLLIL) threads the bilayer. Over 641–801 (SMRRHRKQPY…GASEGPSPLW (161 aa)) the chain is Cytoplasmic.

Its subcellular location is the cell membrane. In terms of biological role, cadherins are calcium-dependent cell adhesion proteins. They preferentially interact with themselves in a homophilic manner in connecting cells; cadherins may thus contribute to the sorting of heterogeneous cell types. This Rattus norvegicus (Rat) protein is Cadherin-20 (Cdh20).